Here is a 285-residue protein sequence, read N- to C-terminus: Zinc transporter ZupT (285 aa).

The next 3 helical transmembrane spans lie at 13-33 (AFLL…IAFF), 41-61 (FLCV…MIEM), and 80-100 (WITV…DKFV). The Fe(2+) site is built by N153 and E156. Residue E156 coordinates Zn(2+). A helical transmembrane segment spans residues 160–180 (TFVSALEGASLAIPITIAIAI). A Zn(2+)-binding site is contributed by H181. Residues N182, E185, and E214 each contribute to the Fe(2+) site. Zn(2+) is bound at residue E185. 3 helical membrane-spanning segments follow: residues 204 to 224 (FLYS…GYTL), 228 to 248 (IFND…MVFI), and 265 to 285 (LAIY…LLFI).

Belongs to the ZIP transporter (TC 2.A.5) family. ZupT subfamily.

It is found in the cell membrane. It catalyses the reaction Zn(2+)(in) = Zn(2+)(out). Its function is as follows. Mediates zinc uptake. May also transport other divalent cations. The protein is Zinc transporter ZupT of Clostridium perfringens (strain 13 / Type A).